A 252-amino-acid polypeptide reads, in one-letter code: 14-3-3 protein 7 (252 aa).

It belongs to the 14-3-3 family. As to quaternary structure, homodimer.

The sequence is that of 14-3-3 protein 7 (TFT7) from Solanum lycopersicum (Tomato).